The following is a 67-amino-acid chain: Penaeidin-4d (67 aa).

Residues 1–19 (MRLLVCLVFLASFAMVCQG) form the signal peptide. 3 disulfides stabilise this stretch: C42–C56, C45–C63, and C57–C64. L66 carries the leucine amide modification.

Belongs to the penaeidin family.

Its subcellular location is the cytoplasmic granule. Functionally, antibacterial and antifungal activity. Presents chitin-binding activity. The sequence is that of Penaeidin-4d from Penaeus setiferus (Atlantic white shrimp).